The chain runs to 237 residues: Ribonuclease PH (237 aa).

Phosphate contacts are provided by residues R86 and 124–126; that span reads GTR.

Belongs to the RNase PH family. As to quaternary structure, homohexameric ring arranged as a trimer of dimers.

It catalyses the reaction tRNA(n+1) + phosphate = tRNA(n) + a ribonucleoside 5'-diphosphate. Functionally, phosphorolytic 3'-5' exoribonuclease that plays an important role in tRNA 3'-end maturation. Removes nucleotide residues following the 3'-CCA terminus of tRNAs; can also add nucleotides to the ends of RNA molecules by using nucleoside diphosphates as substrates, but this may not be physiologically important. Probably plays a role in initiation of 16S rRNA degradation (leading to ribosome degradation) during starvation. This is Ribonuclease PH from Erythrobacter litoralis (strain HTCC2594).